Here is a 361-residue protein sequence, read N- to C-terminus: Cysteine-rich with EGF-like domain protein 2-A (361 aa).

The first 24 residues, 1–24 (MNGSRALHLSAWLLLCLLCSAAVA), serve as a signal peptide directing secretion. In terms of domain architecture, EGF-like 1 spans 134 to 176 (DCLACLGGSERPCHGNGFCNGDGTRSGDGLCRCEAEYTGPFCL). 3 cysteine pairs are disulfide-bonded: C138-C152, C146-C164, and C166-C175. The N-linked (GlcNAc...) asparagine glycan is linked to N188. FU repeat units follow at residues 191 to 238 (YSLC…EESP) and 251 to 298 (SFLC…SEQV). The EGF-like 2; calcium-binding domain maps to 288–329 (DVDECDASEQVCSRENETCLNTAGSYKCTCSEGFEDKEGNCV). 3 disulfide bridges follow: C292–C306, C299–C315, and C317–C328. The N-linked (GlcNAc...) asparagine glycan is linked to N303. Residues 341 to 361 (DGEMGTSASDINISNTAHEDL) are disordered. Polar residues predominate over residues 346–361 (TSASDINISNTAHEDL). Residue N352 is glycosylated (N-linked (GlcNAc...) asparagine).

Belongs to the CRELD family.

Its subcellular location is the secreted. The protein localises to the endoplasmic reticulum. Its function is as follows. Possible role in neuronal acetylcholine receptor transport. The sequence is that of Cysteine-rich with EGF-like domain protein 2-A (creld2-a) from Xenopus laevis (African clawed frog).